Consider the following 319-residue polypeptide: Pantothenate kinase (319 aa).

ATP is bound at residue 101 to 108; that stretch reads GSVAVGKS.

It belongs to the prokaryotic pantothenate kinase family.

It is found in the cytoplasm. The enzyme catalyses (R)-pantothenate + ATP = (R)-4'-phosphopantothenate + ADP + H(+). The protein operates within cofactor biosynthesis; coenzyme A biosynthesis; CoA from (R)-pantothenate: step 1/5. The polypeptide is Pantothenate kinase (Clavibacter michiganensis subsp. michiganensis (strain NCPPB 382)).